Here is a 254-residue protein sequence, read N- to C-terminus: Phosphoribosylaminoimidazole-succinocarboxamide synthase (254 aa).

It belongs to the SAICAR synthetase family.

The catalysed reaction is 5-amino-1-(5-phospho-D-ribosyl)imidazole-4-carboxylate + L-aspartate + ATP = (2S)-2-[5-amino-1-(5-phospho-beta-D-ribosyl)imidazole-4-carboxamido]succinate + ADP + phosphate + 2 H(+). The protein operates within purine metabolism; IMP biosynthesis via de novo pathway; 5-amino-1-(5-phospho-D-ribosyl)imidazole-4-carboxamide from 5-amino-1-(5-phospho-D-ribosyl)imidazole-4-carboxylate: step 1/2. The chain is Phosphoribosylaminoimidazole-succinocarboxamide synthase from Rhizobium meliloti (strain 1021) (Ensifer meliloti).